Reading from the N-terminus, the 518-residue chain is MQFMMPLDTNACAQPMRRAGEGAGTERLMERLNIGGMTQEKALRKRCFGDGVTGTARCVFTSDADRDTPHLRTQSSRKNYADASHVSAVILGGGTGVQLFPLTSTRATPAVPVGGCYRLIDIPMSNCFNSGINKIFVMTQFNSASLNRHIHHTYLGGGINFTDGSVQVLAATQMPDEPAGWFQGTADAIRKFMWILEDHYNQNNIEHVVILCGDQLYRMNYMELVQKHVDDNADITISCAPIDGSRASDYGLVKFDDSGRVIQFLEKPEGADLESMKVDTSFLSYAIDDKQKYPYIASMGIYVLKKDVLLDILKSKYAHLQDFGSEILPRAVLEHNVKACVFTEYWEDIGTIKSFFDANLALTEQPPKFEFYDPKTPFFTSPRYLPPARLEKCKIKDAIISDGCSFSECTIEHSVIGISSRVSIGCELKDTMMMGADQYETEEETSKLLFEGKVPIGIGENTKIRNCIIDMNARIGRNVIIANTQGVQESDHPEEGYYIRSGIVVILKNATIKDGTVI.

The protein belongs to the bacterial/plant glucose-1-phosphate adenylyltransferase family. In terms of assembly, heterotetramer composed of two small and two large subunits.

The protein localises to the cytoplasm. It is found in the cytosol. It catalyses the reaction alpha-D-glucose 1-phosphate + ATP + H(+) = ADP-alpha-D-glucose + diphosphate. The protein operates within glycan biosynthesis; starch biosynthesis. Its activity is regulated as follows. Activated by 3'phosphoglycerate, inhibited by orthophosphate. Allosteric regulation. Inhibited by inorganic phosphate (Pi). Functionally, involved in synthesis of starch. Catalyzes the synthesis of ADP-glucose, a molecule that serves as an activated glycosyl donor for alpha-1,4-glucan synthesis. Essential for starch synthesis in seed endosperm. Is essential for both catalytic and allosteric regulatory properties of the cytosolic heterotetramer enzyme. The protein is Glucose-1-phosphate adenylyltransferase large subunit 2, cytosolic of Oryza sativa subsp. japonica (Rice).